A 273-amino-acid polypeptide reads, in one-letter code: Histidine racemase (273 aa).

The Proton acceptor role is filled by C72. Residue C211 is the Proton donor of the active site.

It belongs to the histidine racemase family. As to quaternary structure, homodimer.

It is found in the cytoplasm. It carries out the reaction L-histidine = D-histidine. Functionally, isomerase that catalyzes the conversion of L-histidine to D-histidine. Functions the biosynthesis of the metallophore staphylopine, which is involved in the acquisition of nickel, cobalt, zinc, copper, and iron, and thus enables bacterial growth inside the host, where metal access is limited. Therefore, this enzyme probably contributes to staphylococcal virulence. The reaction is reversible in vitro, the enzyme can produce D-histidine from the L-stereoisomer and vice versa. Appears to be specific for histidine as it cannot use other amino acids as substrate, including L-alanine and L-methionine. The polypeptide is Histidine racemase (Staphylococcus aureus (strain Mu50 / ATCC 700699)).